Here is a 312-residue protein sequence, read N- to C-terminus: uncharacterized protein (312 aa).

This sequence belongs to the asfivirus CP312R family.

It is found in the virion. This is an uncharacterized protein from African swine fever virus (strain Badajoz 1971 Vero-adapted) (Ba71V).